The primary structure comprises 332 residues: Ferredoxin--NADP reductase (332 aa).

Threonine 20, glutamate 39, glutamine 47, tyrosine 52, valine 92, phenylalanine 126, aspartate 288, and threonine 329 together coordinate FAD.

The protein belongs to the ferredoxin--NADP reductase type 2 family. Homodimer. The cofactor is FAD.

It carries out the reaction 2 reduced [2Fe-2S]-[ferredoxin] + NADP(+) + H(+) = 2 oxidized [2Fe-2S]-[ferredoxin] + NADPH. This is Ferredoxin--NADP reductase from Geobacillus kaustophilus (strain HTA426).